The chain runs to 321 residues: Biotin synthase (321 aa).

The Radical SAM core domain maps to 45–271 (YYGKKVKLNM…INPTKEIRIA (227 aa)). [4Fe-4S] cluster-binding residues include Cys63, Cys67, and Cys70. 4 residues coordinate [2Fe-2S] cluster: Cys106, Cys139, Cys199, and Arg269.

It belongs to the radical SAM superfamily. Biotin synthase family. As to quaternary structure, homodimer. It depends on [4Fe-4S] cluster as a cofactor. [2Fe-2S] cluster serves as cofactor.

The enzyme catalyses (4R,5S)-dethiobiotin + (sulfur carrier)-SH + 2 reduced [2Fe-2S]-[ferredoxin] + 2 S-adenosyl-L-methionine = (sulfur carrier)-H + biotin + 2 5'-deoxyadenosine + 2 L-methionine + 2 oxidized [2Fe-2S]-[ferredoxin]. The protein operates within cofactor biosynthesis; biotin biosynthesis; biotin from 7,8-diaminononanoate: step 2/2. In terms of biological role, catalyzes the conversion of dethiobiotin (DTB) to biotin by the insertion of a sulfur atom into dethiobiotin via a radical-based mechanism. The protein is Biotin synthase of Staphylococcus epidermidis (strain ATCC 35984 / DSM 28319 / BCRC 17069 / CCUG 31568 / BM 3577 / RP62A).